A 335-amino-acid chain; its full sequence is Biotin synthase (335 aa).

Residues 53 to 276 (VEIEGIVSVK…RTILRFAGGR (224 aa)) form the Radical SAM core domain. [4Fe-4S] cluster-binding residues include C66, C70, and C73. The [2Fe-2S] cluster site is built by C109, C142, C201, and R271.

Belongs to the radical SAM superfamily. Biotin synthase family. As to quaternary structure, homodimer. It depends on [4Fe-4S] cluster as a cofactor. Requires [2Fe-2S] cluster as cofactor.

It carries out the reaction (4R,5S)-dethiobiotin + (sulfur carrier)-SH + 2 reduced [2Fe-2S]-[ferredoxin] + 2 S-adenosyl-L-methionine = (sulfur carrier)-H + biotin + 2 5'-deoxyadenosine + 2 L-methionine + 2 oxidized [2Fe-2S]-[ferredoxin]. The protein operates within cofactor biosynthesis; biotin biosynthesis; biotin from 7,8-diaminononanoate: step 2/2. In terms of biological role, catalyzes the conversion of dethiobiotin (DTB) to biotin by the insertion of a sulfur atom into dethiobiotin via a radical-based mechanism. This is Biotin synthase from Acidothermus cellulolyticus (strain ATCC 43068 / DSM 8971 / 11B).